Reading from the N-terminus, the 158-residue chain is Cyclic pyranopterin monophosphate synthase (158 aa).

Residues 75-77 (LCH) and 113-114 (ME) each bind substrate. Residue Asp-128 is part of the active site.

This sequence belongs to the MoaC family. In terms of assembly, homohexamer; trimer of dimers.

The catalysed reaction is (8S)-3',8-cyclo-7,8-dihydroguanosine 5'-triphosphate = cyclic pyranopterin phosphate + diphosphate. It participates in cofactor biosynthesis; molybdopterin biosynthesis. Its function is as follows. Catalyzes the conversion of (8S)-3',8-cyclo-7,8-dihydroguanosine 5'-triphosphate to cyclic pyranopterin monophosphate (cPMP). This is Cyclic pyranopterin monophosphate synthase from Acidiphilium cryptum (strain JF-5).